Consider the following 194-residue polypeptide: Protein DROOPING LEAF (194 aa).

Residues cysteine 15–cysteine 42 form a C4-type zinc finger. The segment at leucine 83–glutamate 103 is disordered.

Belongs to the YABBY family.

The protein resides in the nucleus. In terms of biological role, regulates carpel specification in flower development. Severe or intermediate mutation in DL causes complete or partial homeotic conversion of carpels into stamens without affecting the identities of other floral organs. Interacts antagonistically with class B genes and controls floral meristem determinacy. Regulates midrib formation in leaves probably by inducing cell proliferation in the central region of the leaf. The polypeptide is Protein DROOPING LEAF (DL) (Oryza sativa subsp. japonica (Rice)).